Here is a 413-residue protein sequence, read N- to C-terminus: Glucose-1-phosphate adenylyltransferase (413 aa).

Alpha-D-glucose 1-phosphate-binding positions include glycine 161, 176–177 (EK), and serine 195.

Belongs to the bacterial/plant glucose-1-phosphate adenylyltransferase family. Homotetramer.

The enzyme catalyses alpha-D-glucose 1-phosphate + ATP + H(+) = ADP-alpha-D-glucose + diphosphate. The protein operates within glycan biosynthesis; glycogen biosynthesis. Functionally, involved in the biosynthesis of ADP-glucose, a building block required for the elongation reactions to produce glycogen. Catalyzes the reaction between ATP and alpha-D-glucose 1-phosphate (G1P) to produce pyrophosphate and ADP-Glc. This chain is Glucose-1-phosphate adenylyltransferase, found in Anaeromyxobacter dehalogenans (strain 2CP-C).